The sequence spans 386 residues: MATTKSFLILFFMILATTSSTCATLGEMVTVLSIDGGGIKGIIPAVILEFLEGQLQEVDNNKDARLADYFDVIGGTSTGGLLTAMITTPNENNRPFAAAKDIIPFYFEHGPHIFNYSGSIFGPMYDGKYLLQVLQEKLGETRVHQALTEVAISSFDIKTNKPVIFTKSNLAKSPELDAKMYDICYSTAAAPMYFPPHYFITHTSDGDIYEFNLVDGAVATVGDPALLSLSVATRLAQEDPAFSSIKSLDYKQMLLLSLGTGTNSEFDKTYTAEEAAKWGPLRWLLAIQQMTNAASSYMTDYYISTVFQAHHSQNNYLRVQENALTGTTTEMDDASEANMELLVQVGETLLKKPVSKDSPETYEEALKRFAKLLSDRKKLRANKASY.

The N-terminal stretch at 1–23 (MATTKSFLILFFMILATTSSTCA) is a signal peptide. The PNPLA domain occupies 32–229 (LSIDGGGIKG…TVGDPALLSL (198 aa)). Positions 36–41 (GGGIKG) match the GXGXXG motif. Residues 75-79 (GTSTG) carry the GXSXG motif. The active-site Nucleophile is serine 77. Asparagine 115 carries N-linked (GlcNAc...) asparagine glycosylation. Catalysis depends on aspartate 215, which acts as the Proton acceptor. Positions 215-217 (DGA) match the DGA/G motif. Positions 321-384 (ENALTGTTTE…DRKKLRANKA (64 aa)) form a coiled coil.

Belongs to the patatin family.

The protein localises to the vacuole. Probable lipolytic acyl hydrolase (LAH), an activity which is thought to be involved in the response of tubers to pathogens. This Solanum tuberosum (Potato) protein is Patatin-2-Kuras 2 (pat2-k2).